We begin with the raw amino-acid sequence, 139 residues long: Nucleoside diphosphate kinase (139 aa).

The ATP site is built by K11, F59, R87, T93, R104, and N114. H117 functions as the Pros-phosphohistidine intermediate in the catalytic mechanism.

The protein belongs to the NDK family. In terms of assembly, homotetramer. Mg(2+) serves as cofactor.

The protein localises to the cytoplasm. It carries out the reaction a 2'-deoxyribonucleoside 5'-diphosphate + ATP = a 2'-deoxyribonucleoside 5'-triphosphate + ADP. It catalyses the reaction a ribonucleoside 5'-diphosphate + ATP = a ribonucleoside 5'-triphosphate + ADP. Major role in the synthesis of nucleoside triphosphates other than ATP. The ATP gamma phosphate is transferred to the NDP beta phosphate via a ping-pong mechanism, using a phosphorylated active-site intermediate. The polypeptide is Nucleoside diphosphate kinase (Wolbachia pipientis wMel).